Here is a 288-residue protein sequence, read N- to C-terminus: Probable aquaporin PIP1-2 (288 aa).

The disordered stretch occupies residues 1–37; that stretch reads MEGKEEDVRLGANKFSERQPIGTAAQGSDDKDYKEPP. Transmembrane regions (helical) follow at residues 57–77 and 92–114; these read IAEFMATFLFLYITVLTVMGV and IAWSFGGMIFALVYCTAGISGGH. The NPA 1 motif lies at 116-118; the sequence is NPA. 3 consecutive transmembrane segments (helical) span residues 135 to 155, 177 to 197, and 211 to 231; these read LFYMVMQCLGAICGAGVVKGF, GDGLGAEIVGTFILVYTVFSA, and ILAPLPIGFAVFLVHLATIPI. Positions 237–239 match the NPA 2 motif; sequence NPA. Residues 259 to 279 form a helical membrane-spanning segment; it reads IFWVGPFIGAALAAIYHQVVI.

Belongs to the MIP/aquaporin (TC 1.A.8) family. PIP (TC 1.A.8.11) subfamily. Expressed in roots, leaves and anthers.

The protein resides in the cell membrane. In terms of biological role, aquaporins facilitate the transport of water and small neutral solutes across cell membranes. The protein is Probable aquaporin PIP1-2 (PIP1-2) of Oryza sativa subsp. japonica (Rice).